Reading from the N-terminus, the 98-residue chain is MSTFTTDEVARLANLARIDLTPAELERYAGELEVIASAVARVSEVAGDDVPATSHPIPLTNVWRDDVAAPTLDRGEVLASAPEAADGKFAVPQILGEE.

Belongs to the GatC family. As to quaternary structure, heterotrimer of A, B and C subunits.

It catalyses the reaction L-glutamyl-tRNA(Gln) + L-glutamine + ATP + H2O = L-glutaminyl-tRNA(Gln) + L-glutamate + ADP + phosphate + H(+). The enzyme catalyses L-aspartyl-tRNA(Asn) + L-glutamine + ATP + H2O = L-asparaginyl-tRNA(Asn) + L-glutamate + ADP + phosphate + 2 H(+). Functionally, allows the formation of correctly charged Asn-tRNA(Asn) or Gln-tRNA(Gln) through the transamidation of misacylated Asp-tRNA(Asn) or Glu-tRNA(Gln) in organisms which lack either or both of asparaginyl-tRNA or glutaminyl-tRNA synthetases. The reaction takes place in the presence of glutamine and ATP through an activated phospho-Asp-tRNA(Asn) or phospho-Glu-tRNA(Gln). This Beutenbergia cavernae (strain ATCC BAA-8 / DSM 12333 / CCUG 43141 / JCM 11478 / NBRC 16432 / NCIMB 13614 / HKI 0122) protein is Aspartyl/glutamyl-tRNA(Asn/Gln) amidotransferase subunit C.